The chain runs to 179 residues: Large ribosomal subunit protein uL5 (179 aa).

Belongs to the universal ribosomal protein uL5 family. Part of the 50S ribosomal subunit; part of the 5S rRNA/L5/L18/L25 subcomplex. Contacts the 5S rRNA and the P site tRNA. Forms a bridge to the 30S subunit in the 70S ribosome.

Its function is as follows. This is one of the proteins that bind and probably mediate the attachment of the 5S RNA into the large ribosomal subunit, where it forms part of the central protuberance. In the 70S ribosome it contacts protein S13 of the 30S subunit (bridge B1b), connecting the 2 subunits; this bridge is implicated in subunit movement. Contacts the P site tRNA; the 5S rRNA and some of its associated proteins might help stabilize positioning of ribosome-bound tRNAs. The sequence is that of Large ribosomal subunit protein uL5 from Verminephrobacter eiseniae (strain EF01-2).